Consider the following 539-residue polypeptide: ATP synthase subunit beta (539 aa).

The disordered stretch occupies residues 1–44 (MAKTPAEKPATAAKKPAAPKAAAAPKAAAAKAPAAAKAPAAKKP). Residue 212-219 (GGAGVGKT) participates in ATP binding.

The protein belongs to the ATPase alpha/beta chains family. In terms of assembly, F-type ATPases have 2 components, CF(1) - the catalytic core - and CF(0) - the membrane proton channel. CF(1) has five subunits: alpha(3), beta(3), gamma(1), delta(1), epsilon(1). CF(0) has three main subunits: a(1), b(2) and c(9-12). The alpha and beta chains form an alternating ring which encloses part of the gamma chain. CF(1) is attached to CF(0) by a central stalk formed by the gamma and epsilon chains, while a peripheral stalk is formed by the delta and b chains.

It localises to the cell inner membrane. The catalysed reaction is ATP + H2O + 4 H(+)(in) = ADP + phosphate + 5 H(+)(out). Functionally, produces ATP from ADP in the presence of a proton gradient across the membrane. The catalytic sites are hosted primarily by the beta subunits. The protein is ATP synthase subunit beta of Caulobacter vibrioides (strain ATCC 19089 / CIP 103742 / CB 15) (Caulobacter crescentus).